A 153-amino-acid polypeptide reads, in one-letter code: Replicase large subunit (153 aa).

The protein belongs to the tobamovirus RNA-directed RNA polymerase family.

The catalysed reaction is RNA(n) + a ribonucleoside 5'-triphosphate = RNA(n+1) + diphosphate. Its function is as follows. The replicase large subunit is an RNA-dependent RNA polymerase active in viral RNA replication. This chain is Replicase large subunit, found in Citrullus (Cucumber).